Here is a 122-residue protein sequence, read N- to C-terminus: Large ribosomal subunit protein bL12 (122 aa).

The protein belongs to the bacterial ribosomal protein bL12 family. Homodimer. Part of the ribosomal stalk of the 50S ribosomal subunit. Forms a multimeric L10(L12)X complex, where L10 forms an elongated spine to which 2 to 4 L12 dimers bind in a sequential fashion. Binds GTP-bound translation factors.

Its function is as follows. Forms part of the ribosomal stalk which helps the ribosome interact with GTP-bound translation factors. Is thus essential for accurate translation. This Aliivibrio fischeri (strain ATCC 700601 / ES114) (Vibrio fischeri) protein is Large ribosomal subunit protein bL12.